Reading from the N-terminus, the 451-residue chain is tRNA modification GTPase MnmE (451 aa).

(6S)-5-formyl-5,6,7,8-tetrahydrofolate is bound by residues Arg23, Glu80, and Lys119. The 158-residue stretch at 215–372 (GIKVVLTGQP…LRTVLLKTVG (158 aa)) folds into the TrmE-type G domain. Asn225 lines the K(+) pocket. GTP is bound by residues 225–230 (NVGKSS), 244–250 (TEIPGTT), and 269–272 (DTAG). Ser229 contacts Mg(2+). 3 residues coordinate K(+): Thr244, Ile246, and Thr249. Thr250 contributes to the Mg(2+) binding site. Position 451 (Lys451) interacts with (6S)-5-formyl-5,6,7,8-tetrahydrofolate.

This sequence belongs to the TRAFAC class TrmE-Era-EngA-EngB-Septin-like GTPase superfamily. TrmE GTPase family. As to quaternary structure, homodimer. Heterotetramer of two MnmE and two MnmG subunits. Requires K(+) as cofactor.

The protein localises to the cytoplasm. Its function is as follows. Exhibits a very high intrinsic GTPase hydrolysis rate. Involved in the addition of a carboxymethylaminomethyl (cmnm) group at the wobble position (U34) of certain tRNAs, forming tRNA-cmnm(5)s(2)U34. The sequence is that of tRNA modification GTPase MnmE from Nitrosomonas eutropha (strain DSM 101675 / C91 / Nm57).